A 194-amino-acid chain; its full sequence is MSTEKLKHHKIIFVVGGPGSGKGTQCEKIVHKYGYTHLSTGDLLRAEVSSGSERGKKLQAIMEKGELVPLDTVLDMLRDAMLAKADTSKGFLIDGYPREVKQGEEFEKKIAPPTLLLYVDAGKETMVKRLLKRGETSGRVDDNEETIKKRLETYYKATEPVIAFYKGRGIVRQLNAEGTVDEVFQQVCSYLDKL.

19–24 (GSGKGT) serves as a coordination point for ATP. The tract at residues 39 to 68 (STGDLLRAEVSSGSERGKKLQAIMEKGELV) is NMP. AMP contacts are provided by residues Thr40, Arg45, 66–68 (ELV), 95–98 (GYPR), and Gln102. Residues 132 to 142 (KRGETSGRVDD) are LID. Arg133 lines the ATP pocket. Positions 139 and 150 each coordinate AMP. ATP is bound at residue Gly178.

It belongs to the adenylate kinase family. AK1 subfamily. In terms of assembly, monomer. Requires Mg(2+) as cofactor. In terms of tissue distribution, skeletal muscle.

It localises to the cytoplasm. It catalyses the reaction a ribonucleoside 5'-phosphate + ATP = a ribonucleoside 5'-diphosphate + ADP. The enzyme catalyses AMP + ATP = 2 ADP. It carries out the reaction dAMP + ATP = dADP + ADP. The catalysed reaction is dATP + AMP = dADP + ADP. It catalyses the reaction dAMP + dATP = 2 dADP. The enzyme catalyses a 2'-deoxyribonucleoside 5'-diphosphate + ATP = a 2'-deoxyribonucleoside 5'-triphosphate + ADP. It carries out the reaction a ribonucleoside 5'-diphosphate + ATP = a ribonucleoside 5'-triphosphate + ADP. The catalysed reaction is CDP + GTP = CTP + GDP. It catalyses the reaction GDP + ATP = GTP + ADP. The enzyme catalyses UDP + ATP = UTP + ADP. It carries out the reaction GTP + UDP = UTP + GDP. The catalysed reaction is dTDP + GTP = dTTP + GDP. It catalyses the reaction dCDP + GTP = dCTP + GDP. The enzyme catalyses dGDP + ATP = dGTP + ADP. It carries out the reaction dADP + GTP = dATP + GDP. The catalysed reaction is thiamine diphosphate + ADP = thiamine triphosphate + AMP. Its function is as follows. Catalyzes the reversible transfer of the terminal phosphate group between ATP and AMP. Also displays broad nucleoside diphosphate kinase activity. Plays an important role in cellular energy homeostasis and in adenine nucleotide metabolism. Also catalyzes at a very low rate the synthesis of thiamine triphosphate (ThTP) from thiamine diphosphate (ThDP) and ADP. The chain is Adenylate kinase isoenzyme 1 from Gallus gallus (Chicken).